The primary structure comprises 336 residues: Ankyrin repeat and SOCS box protein 1 (336 aa).

6 ANK repeats span residues 37 to 69 (CDDT…RINE), 78 to 107 (LPCT…EVDL), 111 to 140 (KGQT…DPNG), 144 to 173 (HRST…DVDV), 192 to 221 (LVVC…NPDF), and 236 to 266 (SPGC…NLNL). The SOCS box domain maps to 287-336 (LQVFKEARSIPRTLLSLCRVAVRRALGKYRLHLVPSLPLPDPIKKFLLYE).

It belongs to the ankyrin SOCS box (ASB) family. In terms of assembly, interacts with CUL5 and RNF7. In terms of tissue distribution, highest expression in testis, spleen, bone marrow and salivary gland.

It functions in the pathway protein modification; protein ubiquitination. Probable substrate-recognition component of a SCF-like ECS (Elongin-Cullin-SOCS-box protein) E3 ligase complex which mediates the ubiquitination and subsequent proteasomal degradation of target proteins. Mediates Notch-induced ubiquitination and degradation of TCF3/E2A and JAK2. May play a role in testis development. This is Ankyrin repeat and SOCS box protein 1 (Asb1) from Mus musculus (Mouse).